A 555-amino-acid polypeptide reads, in one-letter code: Glutamine--tRNA ligase (555 aa).

A 'HIGH' region motif is present at residues 34–44 (PEPNGYLHIGH). Residues 35-37 (EPN) and 41-47 (HIGHAKS) contribute to the ATP site. Residues D67 and Y212 each contribute to the L-glutamine site. ATP is bound by residues T231, 261–262 (RL), and 269–271 (MSK). A 'KMSKS' region motif is present at residues 268-272 (VMSKR). The tract at residues 317-324 (TKQDNTIE) is interaction with tRNA.

This sequence belongs to the class-I aminoacyl-tRNA synthetase family. In terms of assembly, monomer.

It is found in the cytoplasm. The enzyme catalyses tRNA(Gln) + L-glutamine + ATP = L-glutaminyl-tRNA(Gln) + AMP + diphosphate. This is Glutamine--tRNA ligase from Salmonella paratyphi B (strain ATCC BAA-1250 / SPB7).